Consider the following 101-residue polypeptide: MAKQSMKNRELKRQRTVAKFAQKRAALKAIIASPESTPEARWEAQVALQKQPRDASASRLRNRCRLTGRPHGVYRKFGLARNMLRQAAMRGDVPGLVKASW.

It belongs to the universal ribosomal protein uS14 family. In terms of assembly, part of the 30S ribosomal subunit. Contacts proteins S3 and S10.

In terms of biological role, binds 16S rRNA, required for the assembly of 30S particles and may also be responsible for determining the conformation of the 16S rRNA at the A site. In Stutzerimonas stutzeri (strain A1501) (Pseudomonas stutzeri), this protein is Small ribosomal subunit protein uS14.